We begin with the raw amino-acid sequence, 304 residues long: GTPase Era (304 aa).

Residues 11 to 179 enclose the Era-type G domain; it reads YCGFIAIVGR…QKIVRKSLRE (169 aa). The segment at 19-26 is G1; the sequence is GRPNVGKS. A GTP-binding site is contributed by 19–26; it reads GRPNVGKS. Residues 45–49 form a G2 region; it reads QTTRH. The tract at residues 66 to 69 is G3; sequence DTPG. GTP is bound by residues 66 to 70 and 128 to 131; these read DTPGL and NKVD. The interval 128–131 is G4; it reads NKVD. The interval 158–160 is G5; that stretch reads ISA. Residues 210 to 287 form the KH type-2 domain; it reads TGEELPYSVT…HLELWVKVKA (78 aa).

It belongs to the TRAFAC class TrmE-Era-EngA-EngB-Septin-like GTPase superfamily. Era GTPase family. As to quaternary structure, monomer.

Its subcellular location is the cytoplasm. The protein resides in the cell inner membrane. In terms of biological role, an essential GTPase that binds both GDP and GTP, with rapid nucleotide exchange. Plays a role in 16S rRNA processing and 30S ribosomal subunit biogenesis and possibly also in cell cycle regulation and energy metabolism. The protein is GTPase Era of Haemophilus ducreyi (strain 35000HP / ATCC 700724).